Here is an 82-residue protein sequence, read N- to C-terminus: Diphthamide biosynthesis protein 3 (82 aa).

In terms of domain architecture, DPH-type MB spans 8 to 64 (IYDEVEIEDMTYDPALQTYSYPCPCGDKFEIALADLQDGQDIAVCPSCSLMVRVIFE). Fe cation-binding residues include Cys-30, Cys-32, Cys-52, and Cys-55.

The protein belongs to the DPH3 family. As to quaternary structure, component of the 2-(3-amino-3-carboxypropyl)histidine synthase complex composed of dph-1, dph-2, dph-3 and a NADH-dependent reductase, predominantly cbr-1. Requires Fe(2+) as cofactor.

It is found in the cytoplasm. The protein localises to the nucleus. It carries out the reaction [3Fe-4S](1+)-[protein] + Fe(2+)-[Dph3] = [3Fe-4S](0)-[protein] + Fe(3+)-[Dph3]. It catalyses the reaction 2 [3Fe-4S](0)-[protein] + 2 Fe(2+)-[Dph3] + NADH = 2 [4Fe-4S](1+)-[protein] + 2 [Dph3] + NAD(+) + H(+). Its pathway is protein modification; peptidyl-diphthamide biosynthesis. Its function is as follows. Required for the first step of diphthamide biosynthesis, a post-translational modification of histidine which occurs in elongation factor 2. Dph-1 and dph-2 transfer a 3-amino-3-carboxypropyl (ACP) group from S-adenosyl-L-methionine (SAM) to a histidine residue, the reaction is assisted by a reduction system comprising dph-3 and a NADH-dependent reductase, predominantly cbr-1. Acts as an electron donor to reduce the Fe-S cluster in dph1-dph2 keeping the [4Fe-4S] clusters in the active and reduced state. Restores iron to dph-1-dph-2 iron-sulfur clusters which have degraded from [4Fe-4S] to [3Fe-4S] by donating an iron atom to reform [4Fe-4S] clusters, in a manner dependent on the presence of elongation factor 2 and SAM. Associates with the elongator complex and is required for tRNA Wobble base modifications mediated by the elongator complex. The elongator complex is required for multiple tRNA modifications, including mcm5U (5-methoxycarbonylmethyl uridine), mcm5s 2U (5-methoxycarbonylmethyl-2-thiouridine), and ncm5U (5-carbamoylmethyl uridine). In Neurospora crassa (strain ATCC 24698 / 74-OR23-1A / CBS 708.71 / DSM 1257 / FGSC 987), this protein is Diphthamide biosynthesis protein 3 (dph-3).